Here is a 320-residue protein sequence, read N- to C-terminus: 4-diphosphocytidyl-2-C-methyl-D-erythritol kinase (320 aa).

Lysine 20 is a catalytic residue. Position 112–122 (112–122 (PVAGGMGGGSA)) interacts with ATP. Residue aspartate 154 is part of the active site.

It belongs to the GHMP kinase family. IspE subfamily.

The enzyme catalyses 4-CDP-2-C-methyl-D-erythritol + ATP = 4-CDP-2-C-methyl-D-erythritol 2-phosphate + ADP + H(+). Its pathway is isoprenoid biosynthesis; isopentenyl diphosphate biosynthesis via DXP pathway; isopentenyl diphosphate from 1-deoxy-D-xylulose 5-phosphate: step 3/6. Catalyzes the phosphorylation of the position 2 hydroxy group of 4-diphosphocytidyl-2C-methyl-D-erythritol. This chain is 4-diphosphocytidyl-2-C-methyl-D-erythritol kinase, found in Arthrobacter sp. (strain FB24).